The sequence spans 954 residues: Kinesin-like protein KIN-7A (954 aa).

Residues Met1–Arg29 are disordered. Residues Thr17–Thr28 are compositionally biased toward low complexity. The Kinesin motor domain maps to Lys34 to Val354. Gly119–Thr126 contacts ATP. Coiled-coil stretches lie at residues Val363–Gln436 and Leu480–Ser588. 2 disordered regions span residues Pro624–Asn689 and Gly741–Asp762. A compositionally biased stretch (low complexity) spans Pro630–Pro639. 2 stretches are compositionally biased toward basic and acidic residues: residues Leu640–Glu660 and Lys666–Arg681.

Belongs to the TRAFAC class myosin-kinesin ATPase superfamily. Kinesin family. KIN-7 subfamily. In terms of tissue distribution, ubiquitous with a preferential expression in the shoot apical meristem (SAM).

In terms of biological role, may be essential to promote the progression of cytokinesis during node-internode differentiation. The polypeptide is Kinesin-like protein KIN-7A (Oryza sativa subsp. japonica (Rice)).